The primary structure comprises 573 residues: Pentatricopeptide repeat-containing protein At3g62890 (573 aa).

10 PPR repeats span residues 23–60 (ESFLWNIIIRAIVHNVSSPQRHSPISVYLRMRNHRVSP), 61–95 (DFHTFPFLLPSFHNPLHLPLGQRTHAQILLFGLDK), 96–126 (DPFVRTSLLNMYSSCGDLRSAQRVFDDSGSK), 127–161 (DLPAWNSVVNAYAKAGLIDDARKLFDEMPERNVIS), 162–188 (WSCLINGYVMCGKYKEALDLFREMQLP), 198–232 (NEFTMSTVLSACGRLGALEQGKWVHAYIDKYHVEI), 233–263 (DIVLGTALIDMYAKCGSLERAKRVFNALGSK), 265–295 (DVKAYSAMICCLAMYGLTDECFQLFSEMTTS), 301–336 (NSVTFVGILGACVHRGLINEGKSYFKMMIEEFGITP), and 337–367 (SIQHYGCMVDLYGRSGLIKEAESFIASMPME). Residues 372 to 447 (IWGSLLSGSR…VPGCSYVEVE (76 aa)) are type E motif; degenerate. The interval 448–478 (GVVHEFVVGDESQQESERIYAMLDEIMQRLR) is type E(+) motif. A type DYW motif region spans residues 479-573 (EAGYVTDTKE…DGSCSCRDFW (95 aa)).

This sequence belongs to the PPR family. PCMP-H subfamily.

In Arabidopsis thaliana (Mouse-ear cress), this protein is Pentatricopeptide repeat-containing protein At3g62890 (PCMP-H82).